The following is a 68-amino-acid chain: Small ribosomal subunit protein bS21 (68 aa).

The segment covering 37-49 (EKPSEKRAREKAA) has biased composition (basic and acidic residues). The tract at residues 37–68 (EKPSEKRAREKAAAVRRARKMERKRMERDGIK) is disordered. Basic residues predominate over residues 50-59 (AVRRARKMER).

The protein belongs to the bacterial ribosomal protein bS21 family.

This Erythrobacter litoralis (strain HTCC2594) protein is Small ribosomal subunit protein bS21.